We begin with the raw amino-acid sequence, 103 residues long: Small ribosomal subunit protein uS10 (103 aa).

It belongs to the universal ribosomal protein uS10 family. Part of the 30S ribosomal subunit.

Functionally, involved in the binding of tRNA to the ribosomes. This Fusobacterium nucleatum subsp. nucleatum (strain ATCC 25586 / DSM 15643 / BCRC 10681 / CIP 101130 / JCM 8532 / KCTC 2640 / LMG 13131 / VPI 4355) protein is Small ribosomal subunit protein uS10.